The chain runs to 266 residues: CAAX prenyl protease 2 (266 aa).

3 consecutive transmembrane segments (helical) span residues 1–21 (MGAG…VHLF), 42–59 (LLSN…LRDY), and 78–98 (ITYP…MMQI). Active-site proton donor/acceptor residues include Glu-131 and His-164. 3 helical membrane passes run 186–206 (GFQF…QLTT), 210–230 (IVPI…WLEI), and 239–259 (RLTL…LLYT).

The protein belongs to the peptidase U48 family.

The protein resides in the endoplasmic reticulum membrane. Its subcellular location is the membrane. It catalyses the reaction Hydrolyzes the peptide bond -P2-(S-farnesyl or geranylgeranyl)C-P1'-P2'-P3'-COOH where P1' and P2' are amino acids with aliphatic sidechains and P3' is any C-terminal residue.. Functionally, protease involved in the processing of a variety of prenylated proteins containing the C-terminal CAAX motif, where C is a cysteine modified with an isoprenoid lipid, A is an aliphatic amino acid and X is any C-terminal amino acid. Proteolytically removes the C-terminal three residues of farnesylated and geranylated proteins, leaving the prenylated cysteine as the new C-terminus. The chain is CAAX prenyl protease 2 from Caenorhabditis elegans.